Consider the following 110-residue polypeptide: Large ribosomal subunit protein uL22 (110 aa).

Belongs to the universal ribosomal protein uL22 family. Part of the 50S ribosomal subunit.

In terms of biological role, this protein binds specifically to 23S rRNA; its binding is stimulated by other ribosomal proteins, e.g. L4, L17, and L20. It is important during the early stages of 50S assembly. It makes multiple contacts with different domains of the 23S rRNA in the assembled 50S subunit and ribosome. Functionally, the globular domain of the protein is located near the polypeptide exit tunnel on the outside of the subunit, while an extended beta-hairpin is found that lines the wall of the exit tunnel in the center of the 70S ribosome. The chain is Large ribosomal subunit protein uL22 from Nitrosococcus oceani (strain ATCC 19707 / BCRC 17464 / JCM 30415 / NCIMB 11848 / C-107).